A 115-amino-acid polypeptide reads, in one-letter code: Protein VCF2 (115 aa).

Positions 1–12 are enriched in basic residues; it reads MGGCPVRKRRRN. The interval 1–70 is disordered; sequence MGGCPVRKRR…GPEGNLNQIV (70 aa). Residues 33 to 44 show a composition bias toward polar residues; that stretch reads FQDSQDTEFSWS.

This sequence belongs to the VCF family.

This chain is Protein VCF2, found in Homo sapiens (Human).